The following is a 107-amino-acid chain: Replication initiation control protein YabA (107 aa).

Zn(2+)-binding residues include histidine 81, cysteine 83, cysteine 97, and cysteine 100.

This sequence belongs to the YabA family. Homotetramer. Interacts with both DnaA and DnaN, acting as a bridge between these two proteins. Requires Zn(2+) as cofactor.

It is found in the cytoplasm. Its subcellular location is the nucleoid. Functionally, involved in control of chromosome replication initiation. Inhibits the cooperative binding of DnaA to the oriC region, thus negatively regulating initiation of chromosome replication. Inhibits the ability of DnaA-ATP to form a helix on DNA; does not disassemble preformed DnaA-DNA helices. Decreases the residence time of DnaA on the chromosome at its binding sites (oriC, replication forks and promoter-binding sites). Tethers DnaA to the replication machinery via the DNA polymerase beta sliding clamp subunit (dnaN). Associates with oriC and other DnaA targets on the chromosome in a DnaA-dependent manner. This chain is Replication initiation control protein YabA, found in Streptococcus pyogenes serotype M3 (strain ATCC BAA-595 / MGAS315).